A 443-amino-acid polypeptide reads, in one-letter code: Trigger factor (443 aa).

A PPIase FKBP-type domain is found at 161–246; sequence ADGVTITYHG…VISVTAPRLP (86 aa).

It belongs to the FKBP-type PPIase family. Tig subfamily.

The protein localises to the cytoplasm. The catalysed reaction is [protein]-peptidylproline (omega=180) = [protein]-peptidylproline (omega=0). In terms of biological role, involved in protein export. Acts as a chaperone by maintaining the newly synthesized protein in an open conformation. Functions as a peptidyl-prolyl cis-trans isomerase. This is Trigger factor from Nitrosococcus oceani (strain ATCC 19707 / BCRC 17464 / JCM 30415 / NCIMB 11848 / C-107).